Reading from the N-terminus, the 360-residue chain is Heat-inducible transcription repressor HrcA (360 aa).

This sequence belongs to the HrcA family.

Functionally, negative regulator of class I heat shock genes (grpE-dnaK-dnaJ and groELS operons). Prevents heat-shock induction of these operons. This Streptococcus thermophilus (strain CNRZ 1066) protein is Heat-inducible transcription repressor HrcA.